The primary structure comprises 82 residues: Delta-actitoxin-Aeq2b 1 (82 aa).

Positions 1–19 (MNRLMILVFAAVILALASA) are cleaved as a signal peptide. A propeptide spanning residues 20–26 (DEDVDIA) is cleaved from the precursor. Cystine bridges form between Cys-32–Cys-79, Cys-34–Cys-69, and Cys-62–Cys-80.

This sequence belongs to the sea anemone sodium channel inhibitory toxin family. Type I subfamily.

The protein localises to the secreted. It localises to the nematocyst. Its function is as follows. Binds specifically to voltage-gated sodium channels (Nav), thereby delaying their inactivation during signal transduction. Causes death to crabs. This Actinia equina (Beadlet anemone) protein is Delta-actitoxin-Aeq2b 1.